We begin with the raw amino-acid sequence, 333 residues long: Ribosomal RNA small subunit methyltransferase H (333 aa).

S-adenosyl-L-methionine contacts are provided by residues 36 to 38, Asp-54, Phe-81, Asp-102, and Gln-109; that span reads GGY.

Belongs to the methyltransferase superfamily. RsmH family.

The protein resides in the cytoplasm. The catalysed reaction is cytidine(1402) in 16S rRNA + S-adenosyl-L-methionine = N(4)-methylcytidine(1402) in 16S rRNA + S-adenosyl-L-homocysteine + H(+). Functionally, specifically methylates the N4 position of cytidine in position 1402 (C1402) of 16S rRNA. In Afipia carboxidovorans (strain ATCC 49405 / DSM 1227 / KCTC 32145 / OM5) (Oligotropha carboxidovorans), this protein is Ribosomal RNA small subunit methyltransferase H.